The following is a 400-amino-acid chain: Argininosuccinate synthase (400 aa).

8–16 (AYSGGLDTS) contributes to the ATP binding site. Tyr-85 is an L-citrulline binding site. Gly-115 serves as a coordination point for ATP. L-aspartate is bound by residues Thr-117, Asn-121, and Asp-122. Asn-121 provides a ligand contact to L-citrulline. Residues Arg-125, Ser-173, Glu-258, and Tyr-270 each coordinate L-citrulline.

Belongs to the argininosuccinate synthase family. Type 1 subfamily. As to quaternary structure, homotetramer.

It is found in the cytoplasm. It carries out the reaction L-citrulline + L-aspartate + ATP = 2-(N(omega)-L-arginino)succinate + AMP + diphosphate + H(+). The protein operates within amino-acid biosynthesis; L-arginine biosynthesis; L-arginine from L-ornithine and carbamoyl phosphate: step 2/3. The sequence is that of Argininosuccinate synthase from Staphylococcus haemolyticus (strain JCSC1435).